The chain runs to 249 residues: Galactan endo-beta-1,3-galactanase (249 aa).

Residues 1-21 form the signal peptide; sequence MKLFVVLACLAAPGTFPFVDA. The region spanning 34–247 is the GH16 domain; that stretch reads STYWNNFYPW…KARNVQVTRT (214 aa). The N-linked (GlcNAc...) asparagine glycan is linked to asparagine 48. Glutamate 138 functions as the Nucleophile in the catalytic mechanism. The active-site Proton donor is the glutamate 143. Asparagine 156 carries an N-linked (GlcNAc...) asparagine glycan.

This sequence belongs to the glycosyl hydrolase 16 family. N-glycosylated.

It carries out the reaction The enzyme specifically hydrolyzes beta-1,3-galactan and beta-1,3-galactooligosaccharides.. In terms of biological role, specifically hydrolyzes beta-1,3-galactan in an endo-fashion. Requires at least 3 contiguous beta-1,3-residues. The sequence is that of Galactan endo-beta-1,3-galactanase (EN3GAL) from Flammulina velutipes (Agaricus velutipes).